Here is a 473-residue protein sequence, read N- to C-terminus: ATP synthase subunit beta (473 aa).

158 to 165 (GGAGVGKT) serves as a coordination point for ATP.

It belongs to the ATPase alpha/beta chains family. F-type ATPases have 2 components, CF(1) - the catalytic core - and CF(0) - the membrane proton channel. CF(1) has five subunits: alpha(3), beta(3), gamma(1), delta(1), epsilon(1). CF(0) has three main subunits: a(1), b(2) and c(9-12). The alpha and beta chains form an alternating ring which encloses part of the gamma chain. CF(1) is attached to CF(0) by a central stalk formed by the gamma and epsilon chains, while a peripheral stalk is formed by the delta and b chains.

The protein localises to the cell membrane. It catalyses the reaction ATP + H2O + 4 H(+)(in) = ADP + phosphate + 5 H(+)(out). Its function is as follows. Produces ATP from ADP in the presence of a proton gradient across the membrane. The catalytic sites are hosted primarily by the beta subunits. The sequence is that of ATP synthase subunit beta from Geobacillus thermodenitrificans (strain NG80-2).